Reading from the N-terminus, the 306-residue chain is 4-diphosphocytidyl-2-C-methyl-D-erythritol kinase (306 aa).

Lys-11 is a catalytic residue. 98-108 lines the ATP pocket; sequence PIAGGMGGGSA. Residue Asp-140 is part of the active site.

The protein belongs to the GHMP kinase family. IspE subfamily.

It catalyses the reaction 4-CDP-2-C-methyl-D-erythritol + ATP = 4-CDP-2-C-methyl-D-erythritol 2-phosphate + ADP + H(+). It functions in the pathway isoprenoid biosynthesis; isopentenyl diphosphate biosynthesis via DXP pathway; isopentenyl diphosphate from 1-deoxy-D-xylulose 5-phosphate: step 3/6. Functionally, catalyzes the phosphorylation of the position 2 hydroxy group of 4-diphosphocytidyl-2C-methyl-D-erythritol. This is 4-diphosphocytidyl-2-C-methyl-D-erythritol kinase from Leifsonia xyli subsp. xyli (strain CTCB07).